The following is a 164-amino-acid chain: Zinc finger protein ZAT8 (164 aa).

2 C2H2-type zinc fingers span residues 37–59 (FRCK…RASH) and 85–107 (HPCP…MRRH).

Its subcellular location is the nucleus. Its function is as follows. Probable transcription factor that may be involved in stress responses. In Arabidopsis thaliana (Mouse-ear cress), this protein is Zinc finger protein ZAT8 (ZAT8).